The sequence spans 321 residues: Transaldolase (321 aa).

The active-site Schiff-base intermediate with substrate is the Lys132.

The protein belongs to the transaldolase family. Type 1 subfamily. As to quaternary structure, homodimer.

The protein resides in the cytoplasm. It carries out the reaction D-sedoheptulose 7-phosphate + D-glyceraldehyde 3-phosphate = D-erythrose 4-phosphate + beta-D-fructose 6-phosphate. The protein operates within carbohydrate degradation; pentose phosphate pathway; D-glyceraldehyde 3-phosphate and beta-D-fructose 6-phosphate from D-ribose 5-phosphate and D-xylulose 5-phosphate (non-oxidative stage): step 2/3. Functionally, transaldolase is important for the balance of metabolites in the pentose-phosphate pathway. This Agrobacterium fabrum (strain C58 / ATCC 33970) (Agrobacterium tumefaciens (strain C58)) protein is Transaldolase.